Reading from the N-terminus, the 623-residue chain is MRRCTKNSRSTNPPRDPNTLSNYNAFRTTHTTVNFDILFEKQKLTGNVMHKLISLTNLEAREVILDSSFLNIHDVKVDGKQSKFELLPRQEPYGSALKIPLAEGVALSKTLDIDITVETTEKCTALQWLTPAQTSTQKHPYMFTQCQAIHARSIFPCQDTPDVKAVIDFNISSPLPVIASGVPVNDVSSSSSKSKNKVYKFHQKVPIPTYLFAMASGEIAEAPIGPRSRVAASPDKLEECKWELEADTEKFMQAIDKIIFPYIWGEYNVLILPPSFPYGGMENPIFTFATPSVISKDRQNVDVIAHELAHSWSGNLVTNASWEHFWLNEGWTTYLERRILAAVHGEPYRHFSAIIGWKALTESVERYGKDHEFTKLVVDLKGKDPDDAFSSVPYEKGFNFLFYLENLIGKDKFDKFIPHYFTKYKEASLDSYEFKSSILSFFSSDSEAHALLTSFDWDKWFYSPGLPPKPDFDTSLVDIVYALAQKWRTASESGFSPSAVDVNGLVANQLVVFLEQVLVFEKPLSAEQSKLMGDKYGLAKSENAEVLNMYFQVGLKAGDKSVIEPTAAFLSSIGRMKYVRPLYRALDKLDRNIAIEVFEKNKSFYHPICRGLVQKDLFGNKGS.

Residues 1–23 (MRRCTKNSRSTNPPRDPNTLSNY) are disordered. Residues 7–23 (NSRSTNPPRDPNTLSNY) show a composition bias toward polar residues. Residues 145–147 (QCQ) and 277–282 (PYGGME) contribute to the a peptide site. Residue His306 coordinates Zn(2+). The Proton acceptor role is filled by Glu307. Zn(2+)-binding residues include His310 and Glu329. The active-site Proton donor is the Tyr394.

Belongs to the peptidase M1 family. Zn(2+) is required as a cofactor.

It localises to the cytoplasm. The protein localises to the nucleus. It catalyses the reaction an epoxide + H2O = an ethanediol. Its function is as follows. Aminopeptidase that preferentially cleaves di- and tripeptides. Also has low epoxide hydrolase activity (in vitro). Can hydrolyze the epoxide leukotriene LTA(4) but it forms preferentially 5,6-dihydroxy-7,9,11,14-eicosatetraenoic acid rather than the cytokine leukotriene B(4) as the product compared to the homologous mammalian enzyme (in vitro). The protein is Leucine aminopeptidase 2 of Ajellomyces capsulatus (strain NAm1 / WU24) (Darling's disease fungus).